Reading from the N-terminus, the 270-residue chain is Putative phosphoenolpyruvate synthase regulatory protein (270 aa).

150 to 157 (GVSRCGKT) serves as a coordination point for ADP.

The protein belongs to the pyruvate, phosphate/water dikinase regulatory protein family. PSRP subfamily.

It catalyses the reaction [pyruvate, water dikinase] + ADP = [pyruvate, water dikinase]-phosphate + AMP + H(+). The enzyme catalyses [pyruvate, water dikinase]-phosphate + phosphate + H(+) = [pyruvate, water dikinase] + diphosphate. Bifunctional serine/threonine kinase and phosphorylase involved in the regulation of the phosphoenolpyruvate synthase (PEPS) by catalyzing its phosphorylation/dephosphorylation. This Shewanella baltica (strain OS223) protein is Putative phosphoenolpyruvate synthase regulatory protein.